A 515-amino-acid polypeptide reads, in one-letter code: Calcium-dependent protein kinase 2 (515 aa).

A disordered region spans residues 1-51; it reads MGNCCPGSGDAEPASSDASTGNGSSSFKAGASPSSAPAQNKPPAPIGPVLG. Gly-2 is lipidated: N-myristoyl glycine. Residues 14–38 show a composition bias toward low complexity; it reads ASSDASTGNGSSSFKAGASPSSAPA. The region spanning 61-319 is the Protein kinase domain; it reads YTIGKELGRG…AYEVLNHPWI (259 aa). ATP contacts are provided by residues 67 to 75 and Lys-90; that span reads LGRGQFGVT. The active-site Proton acceptor is Asp-185. An autoinhibitory domain region spans residues 325–355; it reads APDTPLDNAVMNRLKQFRAMNQFKKAALRVI. 4 EF-hand domains span residues 362-397, 398-433, 434-469, and 473-504; these read EEIRGLKEMFKSMDSDNSGTITVDELRKGLSKQGTK, LTEAEVQQLMEAADADGNGTIDYDEFITATMHMNRM, DREEHLYTAFQYFDKDNSGCISKEELEQALREKGLL, and DIKDIISEVDADNDGRIDYSEFAAMMRKGNPE. Residues Asp-375, Asp-377, Ser-379, Thr-381, Glu-386, Asp-411, Asp-413, Asn-415, Thr-417, Glu-422, Asp-447, Asp-449, Ser-451, Cys-453, Glu-458, Asp-482, Asp-484, Asp-486, Arg-488, and Glu-493 each contribute to the Ca(2+) site.

The protein belongs to the protein kinase superfamily. Ser/Thr protein kinase family. CDPK subfamily. As to expression, expressed in heading panicles, spikelets and mature pollen grains.

The protein resides in the membrane. The enzyme catalyses L-seryl-[protein] + ATP = O-phospho-L-seryl-[protein] + ADP + H(+). It carries out the reaction L-threonyl-[protein] + ATP = O-phospho-L-threonyl-[protein] + ADP + H(+). Its activity is regulated as follows. Activated by calcium. Autophosphorylation may play an important role in the regulation of the kinase activity. Its function is as follows. May play a role in signal transduction pathways that involve calcium as a second messenger. The chain is Calcium-dependent protein kinase 2 from Oryza sativa subsp. japonica (Rice).